Consider the following 378-residue polypeptide: C-X-C chemokine receptor type 3-2 (378 aa).

At 1-47 the chain is on the extracellular side; that stretch reads MDNSTTAAEVSAPTDYDYNSTSYDDDNPYAAPCSLTETWNFLGRFAP. N-linked (GlcNAc...) asparagine glycans are attached at residues Asn3 and Asn19. A helical transmembrane segment spans residues 48 to 68; that stretch reads VAYILVFILALVGNILVLCVI. The Cytoplasmic portion of the chain corresponds to 69–86; it reads RRYRQSRHSPCSFSLTDT. Residues 87-107 traverse the membrane as a helical segment; it reads FLLHLAVSDLLLAATLPFFAV. Residues 108 to 121 are Extracellular-facing; sequence EWISEWVFGKVMCK. Cys120 and Cys199 are oxidised to a cystine. Residues 122-142 form a helical membrane-spanning segment; the sequence is ITGALFSLNVYCGVLFLACIS. At 143-164 the chain is on the cytoplasmic side; the sequence is FDRYLAIVHAINISWRRKTCHA. The chain crosses the membrane as a helical span at residues 165 to 185; it reads QLACAFIWVICLGLSMVDMHF. Residues 186-212 are Extracellular-facing; that stretch reads RDLVEIPGMNRMVCQIVYSEQYSKQWQ. The chain crosses the membrane as a helical span at residues 213-233; sequence IGMQLVSMVLGFILPLLVMLY. At 234 to 253 the chain is on the cytoplasmic side; the sequence is CYLHIFKALCHATRRQKRRS. A helical membrane pass occupies residues 254–274; sequence LRLIISLVIVFVISWAPYNAL. Over 275–304 the chain is Extracellular; it reads RMTDSLQMLGVIVKSCALNNVLDVGILVTE. A helical transmembrane segment spans residues 305–325; it reads SLGLAHCALNPLLYGLVGVKF. Residues 326 to 378 lie on the Cytoplasmic side of the membrane; the sequence is RRELAQMCKAALGPQGCLGLVGWANGRGSSTRRPTGSFSSVETENTSYFSVMA.

This sequence belongs to the G-protein coupled receptor 1 family.

It is found in the cell membrane. Functionally, receptor for the C-X-C chemokines cxcl11.1 and cxcl11.6. Promotes macrophage chemotaxis to sites of bacterial infection. In Danio rerio (Zebrafish), this protein is C-X-C chemokine receptor type 3-2.